We begin with the raw amino-acid sequence, 330 residues long: DNA-directed RNA polymerase subunit alpha (330 aa).

The tract at residues 1–231 is alpha N-terminal domain (alpha-NTD); sequence MQTNLLKPKA…EQLAVFAQLE (231 aa). Residues 250-330 form an alpha C-terminal domain (alpha-CTD) region; the sequence is FDPILLRPVD…NWPPAGLDKR (81 aa).

The protein belongs to the RNA polymerase alpha chain family. As to quaternary structure, homodimer. The RNAP catalytic core consists of 2 alpha, 1 beta, 1 beta' and 1 omega subunit. When a sigma factor is associated with the core the holoenzyme is formed, which can initiate transcription.

The enzyme catalyses RNA(n) + a ribonucleoside 5'-triphosphate = RNA(n+1) + diphosphate. DNA-dependent RNA polymerase catalyzes the transcription of DNA into RNA using the four ribonucleoside triphosphates as substrates. The protein is DNA-directed RNA polymerase subunit alpha of Acidovorax ebreus (strain TPSY) (Diaphorobacter sp. (strain TPSY)).